The primary structure comprises 368 residues: tRNA-specific 2-thiouridylase MnmA (368 aa).

Residues 11–18 (GMSGGVDS) and Met-37 contribute to the ATP site. Residues 97 to 99 (NPD) are interaction with target base in tRNA. The Nucleophile role is filled by Cys-102. Cys-102 and Cys-199 are disulfide-bonded. Gly-127 serves as a coordination point for ATP. An interaction with tRNA region spans residues 149–151 (KDQ). The active-site Cysteine persulfide intermediate is the Cys-199. Positions 311-312 (RY) are interaction with tRNA.

Belongs to the MnmA/TRMU family. As to quaternary structure, interacts with TusE.

The protein resides in the cytoplasm. The catalysed reaction is S-sulfanyl-L-cysteinyl-[protein] + uridine(34) in tRNA + AH2 + ATP = 2-thiouridine(34) in tRNA + L-cysteinyl-[protein] + A + AMP + diphosphate + H(+). Catalyzes the 2-thiolation of uridine at the wobble position (U34) of tRNA(Lys), tRNA(Glu) and tRNA(Gln), leading to the formation of s(2)U34, the first step of tRNA-mnm(5)s(2)U34 synthesis. Sulfur is provided by IscS, via a sulfur-relay system. Binds ATP and its substrate tRNAs. In Citrobacter koseri (strain ATCC BAA-895 / CDC 4225-83 / SGSC4696), this protein is tRNA-specific 2-thiouridylase MnmA.